A 1147-amino-acid polypeptide reads, in one-letter code: Nucleolar protein 8 (1147 aa).

The RRM domain occupies 8-89 (KRLFVGGLGQ…GTLQIQLAKE (82 aa)). Lys-225 is covalently cross-linked (Glycyl lysine isopeptide (Lys-Gly) (interchain with G-Cter in SUMO2)). A phosphoserine mark is found at Ser-300 and Ser-306. Lys-316 is covalently cross-linked (Glycyl lysine isopeptide (Lys-Gly) (interchain with G-Cter in SUMO2)). The residue at position 362 (Tyr-362) is a Phosphotyrosine. Ser-364 and Ser-365 each carry phosphoserine. Thr-367 is modified (phosphothreonine). Residues 379–401 (KVKNSAESSQPERTVSKKSSFQK) form a disordered region. Over residues 383–400 (SAESSQPERTVSKKSSFQ) the composition is skewed to polar residues. Residue Ser-416 is modified to Phosphoserine. 7 disordered regions span residues 427–452 (KFVN…EEYK), 472–511 (AGSH…DLYN), 592–659 (MENG…PLKA), 686–741 (KALE…EDNQ), 766–888 (ANLD…NEDE), 932–963 (KHDH…AEKL), and 986–1017 (SNTD…TLAC). Residues 441-450 (DSEESEEDEE) are compositionally biased toward acidic residues. 2 stretches are compositionally biased toward polar residues: residues 592–610 (MENG…TSCQ) and 629–650 (TFEN…STNP). Basic and acidic residues-rich tracts occupy residues 700-714 (SLEK…EDPQ) and 732-741 (AKDKQAEDNQ). Ser-704 is modified (phosphoserine). Residue Thr-777 is modified to Phosphothreonine. A phosphoserine mark is found at Ser-783 and Ser-787. Over residues 799 to 809 (CPEKELMKESV) the composition is skewed to basic and acidic residues. Phosphoserine is present on residues Ser-819, Ser-820, Ser-825, Ser-827, and Ser-872. The segment covering 857–883 (SDERFRMDSRFLESDSEDEKKELNEDK) has biased composition (basic and acidic residues). 2 coiled-coil regions span residues 868-898 (LESD…KTLN) and 937-963 (IYER…AEKL). The segment covering 994–1011 (DVPRTEAGAREGTGKIRN) has biased composition (basic and acidic residues). Lys-1038 is covalently cross-linked (Glycyl lysine isopeptide (Lys-Gly) (interchain with G-Cter in SUMO2)). The tract at residues 1055-1086 (PNDPRFQDSSSEEEDIAEEADHSKPSPGEAVP) is disordered. Residues Ser-1063, Ser-1064, Ser-1065, and Ser-1080 each carry the phosphoserine modification.

Interacts with the GTP form of RRAGA, RRAGC and RRAGD. Interacts with NIP7. Interacts with DDX18; the interaction is RNA-dependent. Interacts with DDX47; the interaction is RNA-dependent. Post-translationally, phosphorylated.

Its subcellular location is the nucleus. It localises to the nucleolus. In terms of biological role, plays an essential role in the survival of diffuse-type gastric cancer cells. Acts as a nucleolar anchoring protein for DDX47. May be involved in regulation of gene expression at the post-transcriptional level or in ribosome biogenesis in cancer cells. The chain is Nucleolar protein 8 from Mus musculus (Mouse).